The chain runs to 993 residues: ATP-dependent DNA helicase MPH1 (993 aa).

The Helicase ATP-binding domain maps to 94–261 (IVHKSLFQNT…EVVNNLDISK (168 aa)). ATP is bound at residue 107-114 (IPTGMGKT). The DEAH box motif lies at 209-212 (DEAH). The Helicase C-terminal domain maps to 507 to 655 (KVERLHRQEQ…CIDYKKSDRI (149 aa)). The segment at 530–551 (NDKLERSARRTGSSEEAQISGM) is disordered. A compositionally biased stretch (polar residues) spans 539-551 (RTGSSEEAQISGM).

This sequence belongs to the DEAD box helicase family. DEAH subfamily. FANCM sub-subfamily. Interacts with the MHF histone-fold complex to form the FANCM-MHF complex.

It is found in the nucleus. It carries out the reaction ATP + H2O = ADP + phosphate + H(+). Functionally, ATP-dependent DNA helicase involved in DNA damage repair by homologous recombination and in genome maintenance. Capable of unwinding D-loops. Plays a role in limiting crossover recombinants during mitotic DNA double-strand break (DSB) repair. Component of a FANCM-MHF complex which promotes gene conversion at blocked replication forks, probably by reversal of the stalled fork. The protein is ATP-dependent DNA helicase MPH1 of Saccharomyces cerevisiae (strain YJM789) (Baker's yeast).